We begin with the raw amino-acid sequence, 477 residues long: Bifunctional protein HldE (477 aa).

A ribokinase region spans residues 1-318 (MKVTLPEFER…ENAVRGRADT (318 aa)). N6-acetyllysine is present on Lys179. Residue 195–198 (NLSE) participates in ATP binding. Asp264 is a catalytic residue. The interval 344 to 477 (MTNGVFDILH…IKKIQQDKKG (134 aa)) is cytidylyltransferase.

This sequence in the N-terminal section; belongs to the carbohydrate kinase PfkB family. The protein in the C-terminal section; belongs to the cytidylyltransferase family. Homodimer.

It carries out the reaction D-glycero-beta-D-manno-heptose 7-phosphate + ATP = D-glycero-beta-D-manno-heptose 1,7-bisphosphate + ADP + H(+). The catalysed reaction is D-glycero-beta-D-manno-heptose 1-phosphate + ATP + H(+) = ADP-D-glycero-beta-D-manno-heptose + diphosphate. It participates in nucleotide-sugar biosynthesis; ADP-L-glycero-beta-D-manno-heptose biosynthesis; ADP-L-glycero-beta-D-manno-heptose from D-glycero-beta-D-manno-heptose 7-phosphate: step 1/4. The protein operates within nucleotide-sugar biosynthesis; ADP-L-glycero-beta-D-manno-heptose biosynthesis; ADP-L-glycero-beta-D-manno-heptose from D-glycero-beta-D-manno-heptose 7-phosphate: step 3/4. Catalyzes the phosphorylation of D-glycero-D-manno-heptose 7-phosphate at the C-1 position to selectively form D-glycero-beta-D-manno-heptose-1,7-bisphosphate. Its function is as follows. Catalyzes the ADP transfer from ATP to D-glycero-beta-D-manno-heptose 1-phosphate, yielding ADP-D-glycero-beta-D-manno-heptose. The protein is Bifunctional protein HldE of Escherichia coli O9:H4 (strain HS).